The sequence spans 244 residues: Ribonuclease HII (244 aa).

The 214-residue stretch at 23 to 236 (KIILGLDEAG…SKKLLKEFEE (214 aa)) folds into the RNase H type-2 domain. A divalent metal cation contacts are provided by aspartate 29, glutamate 30, and aspartate 130.

It belongs to the RNase HII family. Mn(2+) serves as cofactor. It depends on Mg(2+) as a cofactor.

Its subcellular location is the cytoplasm. The catalysed reaction is Endonucleolytic cleavage to 5'-phosphomonoester.. Functionally, endonuclease that specifically degrades the RNA of RNA-DNA hybrids. This chain is Ribonuclease HII, found in Methanococcus vannielii (strain ATCC 35089 / DSM 1224 / JCM 13029 / OCM 148 / SB).